A 640-amino-acid chain; its full sequence is Autophagy-related protein 20 (640 aa).

Composition is skewed to polar residues over residues 1-18 (MSDLNDVQENAKLNSETR) and 126-153 (AETCRTSLSGSINSMNGETSASEEPSVS). Disordered regions lie at residues 1–63 (MSDL…NNKV) and 126–156 (AETCRTSLSGSINSMNGETSASEEPSVSNRK). Ser2 carries the post-translational modification N-acetylserine. Positions 140–301 (MNGETSASEE…DFLDPNNHNW (162 aa)) constitute a PX domain. Residues Arg192, Ser194, Lys218, and Arg267 each contribute to the a 1,2-diacyl-sn-glycero-3-phospho-(1D-myo-inositol-3-phosphate) site. Ser361 and Ser363 each carry phosphoserine. Coiled-coil stretches lie at residues 475–512 (LQNEMIKKSLNSKRAQLEKLEAQNNEYKDVDKIIDNEM) and 562–593 (TASINLKKEIEQLSESLEVTENDLEVISKVIK).

The protein belongs to the sorting nexin family. Forms a complex with SNX4 and ATG17.

The protein localises to the endosome membrane. The protein resides in the preautophagosomal structure membrane. In terms of biological role, required for cytoplasm to vacuole transport (Cvt), pexophagy and mitophagy. Also involved in endoplasmic reticulum-specific autophagic process and is essential for the survival of cells subjected to severe ER stress. Functions in protein retrieval from the endocytic pathway. Required for proper sorting of the v-SNARE protein SNC1. This chain is Autophagy-related protein 20 (ATG20), found in Saccharomyces cerevisiae (strain ATCC 204508 / S288c) (Baker's yeast).